The sequence spans 759 residues: Serine/threonine-protein kinase HRK1 (759 aa).

The interval 1-32 is disordered; that stretch reads MPNLLSRNPFHGHHNDHHHDRENSSNNPPQLI. A Phosphoserine modification is found at S37. The interval 45–162 is disordered; the sequence is KQSNDSLRSE…PPPSKSTSTV (118 aa). Low complexity predominate over residues 59 to 97; it reads SMKSTTTTTNYTTTNLNNNTHSHSNATSISTNNYNNNYE. Over residues 113–122 the composition is skewed to polar residues; that stretch reads SPASPKQTHS. The 508-residue stretch at 215–722 folds into the Protein kinase domain; it reads GKLGKLLGSG…LDDIFNDEWF (508 aa). Residues 221 to 229 and K244 contribute to the ATP site; that span reads LGSGAGGSV. D340 functions as the Proton acceptor in the catalytic mechanism. S382 and S472 each carry phosphoserine. Positions 493–502 are enriched in polar residues; it reads PNTPASIQGK. 2 disordered regions span residues 493 to 578 and 614 to 682; these read PNTP…GRVD and AANA…KIIH. The residue at position 495 (T495) is a Phosphothreonine. S498 carries the phosphoserine modification. Acidic residues predominate over residues 510 to 519; sequence VEEETEENKE. Residues 520–547 show a composition bias toward basic and acidic residues; that stretch reads DDSNNDKESTPDNDKESTIDIKISKNEN. The segment covering 614 to 646 has biased composition (low complexity); it reads AANANPDMVPQNNPQQQQQQQQQQQQQQQQQQQ. A compositionally biased stretch (polar residues) spans 663-672; the sequence is ASDNKSSQQH.

The protein belongs to the protein kinase superfamily. Ser/Thr protein kinase family.

The protein localises to the cytoplasm. The enzyme catalyses L-seryl-[protein] + ATP = O-phospho-L-seryl-[protein] + ADP + H(+). It carries out the reaction L-threonyl-[protein] + ATP = O-phospho-L-threonyl-[protein] + ADP + H(+). Its function is as follows. Involved in regulating the activity of the plasma membrane proton pump PMA1. The polypeptide is Serine/threonine-protein kinase HRK1 (HRK1) (Saccharomyces cerevisiae (strain ATCC 204508 / S288c) (Baker's yeast)).